Here is a 718-residue protein sequence, read N- to C-terminus: Sec-independent protein translocase protein TatCt (718 aa).

The next 8 helical transmembrane spans lie at Val-34–Trp-54, Ile-84–Ile-104, Leu-137–Leu-157, Phe-178–Gly-198, Trp-214–Pro-231, Phe-234–Ala-254, Leu-280–Val-300, and Leu-325–Val-345. Residues Arg-421–Thr-451 form a disordered region. Positions Ala-425–Glu-434 are enriched in acidic residues. Helical transmembrane passes span Ala-478–Thr-498, Phe-539–Ala-559, Thr-572–Tyr-592, Phe-621–Leu-641, Glu-661–Met-681, and Phe-682–Leu-702.

The protein belongs to the TatC family. In terms of assembly, forms a complex with TatA.

It is found in the cell membrane. In terms of biological role, part of the twin-arginine translocation (Tat) system that transports large folded proteins containing a characteristic twin-arginine motif in their signal peptide across membranes. The protein is Sec-independent protein translocase protein TatCt of Haloferax volcanii (strain ATCC 29605 / DSM 3757 / JCM 8879 / NBRC 14742 / NCIMB 2012 / VKM B-1768 / DS2) (Halobacterium volcanii).